Here is a 191-residue protein sequence, read N- to C-terminus: Orotate phosphoribosyltransferase (191 aa).

A 5-phospho-alpha-D-ribose 1-diphosphate-binding site is contributed by 114-122 (EDVVTTGKS). The orotate site is built by threonine 118 and arginine 146.

It belongs to the purine/pyrimidine phosphoribosyltransferase family. PyrE subfamily. Homodimer. Mg(2+) is required as a cofactor.

It catalyses the reaction orotidine 5'-phosphate + diphosphate = orotate + 5-phospho-alpha-D-ribose 1-diphosphate. It functions in the pathway pyrimidine metabolism; UMP biosynthesis via de novo pathway; UMP from orotate: step 1/2. In terms of biological role, catalyzes the transfer of a ribosyl phosphate group from 5-phosphoribose 1-diphosphate to orotate, leading to the formation of orotidine monophosphate (OMP). This chain is Orotate phosphoribosyltransferase, found in Clostridium botulinum (strain Kyoto / Type A2).